A 104-amino-acid chain; its full sequence is ESAT-6-like protein (104 aa).

A coiled-coil region spans residues 12-43 (MAQAAQDIEQSANAIRGMQNQLASAKDQLRSH).

This sequence belongs to the WXG100 family. CFP-10 subfamily. As to quaternary structure, in isolation forms a homodimer. Forms a tight 1:1 complex with EsxA. Forms a complex with EsxA and EccC, probably wholly mediated by EsxB; binds in a pocket in the third FtsK (ATPase) domain of EccC (residues 1163-1208).

It localises to the secreted. May help regulate assembly and function of the type VII secretion system (T7SS). Binds to EccC and induces its multimerization. May serve as a chaperone for EsxA. The polypeptide is ESAT-6-like protein (Thermomonospora curvata (strain ATCC 19995 / DSM 43183 / JCM 3096 / KCTC 9072 / NBRC 15933 / NCIMB 10081 / Henssen B9)).